Here is a 744-residue protein sequence, read N- to C-terminus: Adenosylcobalamin-dependent ribonucleoside-triphosphate reductase (744 aa).

Cysteines 120 and 424 form a disulfide. Residues 148-159 form an effector region-1 region; that stretch reads SMPFSFLFDQLM. The interval 169 to 318 is effector region-2; that stretch reads VDENINQIPK…ICNLIGKTVV (150 aa). Residues Cys-413 and Glu-415 contribute to the active site. Positions 570–631 are adenosylcobalamin-binding-1; it reads FHYSGYLIQR…SDNFASAGTV (62 aa). The tract at residues 690 to 729 is adenosylcobalamin-binding-2; that stretch reads LKQAPKEPISKEKYEKADNHITGNVEIVFEQTNEDQKGLE.

Belongs to the class II ribonucleoside-triphosphate reductase family. As to quaternary structure, monomer. Adenosylcob(III)alamin serves as cofactor.

It carries out the reaction a 2'-deoxyribonucleoside 5'-triphosphate + [thioredoxin]-disulfide + H2O = a ribonucleoside 5'-triphosphate + [thioredoxin]-dithiol. Its activity is regulated as follows. Allosterically regulated by ATP and dNTP. This is Adenosylcobalamin-dependent ribonucleoside-triphosphate reductase (rtpR) from Lactobacillus gasseri (strain ATCC 33323 / DSM 20243 / BCRC 14619 / CIP 102991 / JCM 1131 / KCTC 3163 / NCIMB 11718 / NCTC 13722 / AM63).